Here is a 425-residue protein sequence, read N- to C-terminus: Kynurenine/alpha-aminoadipate aminotransferase, mitochondrial (425 aa).

The N-terminal 29 residues, 1-29 (MNYARFITAASAARNPSPIRTMTDILSRG), are a transit peptide targeting the mitochondrion. R20 lines the substrate pocket. K69 carries the N6-acetyllysine modification. The substrate site is built by Y74 and Y142. K179 carries the post-translational modification N6-acetyllysine. Positions 181–208 (EDAKNPQKNTPKFLYTVPNGNNPTGNSL) are disordered. Residues 198-208 (PNGNNPTGNSL) show a composition bias toward polar residues. N202 provides a ligand contact to substrate. K263 carries the post-translational modification N6-(pyridoxal phosphate)lysine; alternate. Residues K263, K339, and K367 each carry the N6-acetyllysine; alternate modification. 3 positions are modified to N6-succinyllysine; alternate: K263, K339, and K367. A substrate-binding site is contributed by R399. Position 422 is an N6-acetyllysine (K422).

This sequence belongs to the class-I pyridoxal-phosphate-dependent aminotransferase family. In terms of assembly, homodimer. It depends on pyridoxal 5'-phosphate as a cofactor. As to expression, higher expression in the liver. Also found in heart, brain, kidney, pancreas, prostate, testis and ovary.

It is found in the mitochondrion. It catalyses the reaction glycine + 2-oxoglutarate = glyoxylate + L-glutamate. It carries out the reaction L-kynurenine + 2-oxoglutarate = kynurenate + L-glutamate + H2O. The enzyme catalyses L-kynurenine + glyoxylate = kynurenate + glycine + H2O. The catalysed reaction is 3-hydroxy-L-kynurenine + glyoxylate = xanthurenate + glycine + H2O. It catalyses the reaction 2-oxohexanoate + L-kynurenine = L-2-aminohexanoate + kynurenate + H2O. It carries out the reaction 3-phenylpyruvate + L-kynurenine = kynurenate + L-phenylalanine + H2O. The enzyme catalyses 4-methylsulfanyl-2-oxobutanoate + L-kynurenine = kynurenate + L-methionine + H2O. The catalysed reaction is 2-oxo-3-sulfanylpropanoate + L-kynurenine = kynurenate + L-cysteine + H2O. It catalyses the reaction indole-3-pyruvate + L-kynurenine = kynurenate + L-tryptophan + H2O. It carries out the reaction 2-oxopentanoate + L-kynurenine = L-2-aminopentanoate + kynurenate + H2O. The enzyme catalyses 4-methyl-2-oxopentanoate + L-kynurenine = kynurenate + L-leucine + H2O. The catalysed reaction is L-2-aminoadipate + 2-oxoglutarate = 2-oxoadipate + L-glutamate. It catalyses the reaction glyoxylate + L-methionine = 4-methylsulfanyl-2-oxobutanoate + glycine. It carries out the reaction L-2-aminoadipate + glyoxylate = 2-oxoadipate + glycine. The enzyme catalyses L-tyrosine + glyoxylate = 3-(4-hydroxyphenyl)pyruvate + glycine. The catalysed reaction is glyoxylate + L-phenylalanine = 3-phenylpyruvate + glycine. It catalyses the reaction L-tryptophan + glyoxylate = indole-3-pyruvate + glycine. It carries out the reaction L-leucine + glyoxylate = 4-methyl-2-oxopentanoate + glycine. The enzyme catalyses 2-oxobutanoate + L-kynurenine = (2S)-2-aminobutanoate + kynurenate + H2O. The catalysed reaction is 2-oxoadipate + L-kynurenine = L-2-aminoadipate + kynurenate + H2O. The protein operates within amino-acid degradation; L-lysine degradation via saccharopine pathway; glutaryl-CoA from L-lysine: step 4/6. Kynurenine transaminase activity is competitively inhibited by aminoadipate, asparagine, glutamate, histidine, cysteine, lysine, 3-hydroxy-kynurenine and phenylalanine. Functionally, transaminase with broad substrate specificity. Has transaminase activity towards aminoadipate, kynurenine, methionine and glutamate. Shows activity also towards tryptophan, aspartate and hydroxykynurenine. Accepts a variety of oxo-acids as amino-group acceptors, with a preference for 2-oxoglutarate, 2-oxocaproic acid, phenylpyruvate and alpha-oxo-gamma-methiol butyric acid. Can also use glyoxylate as amino-group acceptor (in vitro). In Homo sapiens (Human), this protein is Kynurenine/alpha-aminoadipate aminotransferase, mitochondrial.